The sequence spans 450 residues: Membrane-bound lytic murein transglycosylase F 2 (450 aa).

An N-terminal signal peptide occupies residues 1–20 (MRTWIAILAVVLVLLLNACT). Positions 21-261 (DGPEDGPRLE…AMENRYYTYV (241 aa)) are non-LT domain. The segment at 262 to 450 (GEFDFVDLRA…YRDVIRQAFE (189 aa)) is LT domain. Residue glutamate 308 is part of the active site.

It in the N-terminal section; belongs to the bacterial solute-binding protein 3 family. The protein in the C-terminal section; belongs to the transglycosylase Slt family.

The protein localises to the cell outer membrane. The enzyme catalyses Exolytic cleavage of the (1-&gt;4)-beta-glycosidic linkage between N-acetylmuramic acid (MurNAc) and N-acetylglucosamine (GlcNAc) residues in peptidoglycan, from either the reducing or the non-reducing ends of the peptidoglycan chains, with concomitant formation of a 1,6-anhydrobond in the MurNAc residue.. Its function is as follows. Murein-degrading enzyme that degrades murein glycan strands and insoluble, high-molecular weight murein sacculi, with the concomitant formation of a 1,6-anhydromuramoyl product. Lytic transglycosylases (LTs) play an integral role in the metabolism of the peptidoglycan (PG) sacculus. Their lytic action creates space within the PG sacculus to allow for its expansion as well as for the insertion of various structures such as secretion systems and flagella. The chain is Membrane-bound lytic murein transglycosylase F 2 from Alkalilimnicola ehrlichii (strain ATCC BAA-1101 / DSM 17681 / MLHE-1).